Consider the following 127-residue polypeptide: Protein translocase subunit SecE (127 aa).

The Cytoplasmic portion of the chain corresponds to 1–19 (MSANTEAQGSGRGLEAMKW). The chain crosses the membrane as a helical span at residues 20–32 (VVVVALLLVAIVG). The Periplasmic segment spans residues 33–48 (NYLYRDIMLPLRALAV). A helical transmembrane segment spans residues 49–60 (VILIAAAGGVAL). Residues 61–97 (LTTKGKATVAFAREARTEVRKVIWPTRQETLHTTLIV) lie on the Cytoplasmic side of the membrane. Residues 98–115 (AAVTAVMSLILWGLDGIL) form a helical membrane-spanning segment. Topologically, residues 116-127 (VRLVSFITGLRF) are periplasmic.

This sequence belongs to the SecE/SEC61-gamma family. In terms of assembly, component of the Sec protein translocase complex. Heterotrimer consisting of SecY, SecE and SecG subunits. The heterotrimers can form oligomers, although 1 heterotrimer is thought to be able to translocate proteins. Interacts with the ribosome. Interacts with SecDF, and other proteins may be involved. Interacts with SecA.

It is found in the cell inner membrane. Functionally, essential subunit of the Sec protein translocation channel SecYEG. Clamps together the 2 halves of SecY. May contact the channel plug during translocation. In Escherichia coli O157:H7, this protein is Protein translocase subunit SecE.